Here is a 99-residue protein sequence, read N- to C-terminus: Large ribosomal subunit protein uL23 (99 aa).

This sequence belongs to the universal ribosomal protein uL23 family. Part of the 50S ribosomal subunit. Contacts protein L29, and trigger factor when it is bound to the ribosome.

In terms of biological role, one of the early assembly proteins it binds 23S rRNA. One of the proteins that surrounds the polypeptide exit tunnel on the outside of the ribosome. Forms the main docking site for trigger factor binding to the ribosome. This chain is Large ribosomal subunit protein uL23, found in Shewanella woodyi (strain ATCC 51908 / MS32).